Here is a 122-residue protein sequence, read N- to C-terminus: Large ribosomal subunit protein uL14c (122 aa).

The protein belongs to the universal ribosomal protein uL14 family. In terms of assembly, part of the 50S ribosomal subunit.

It is found in the plastid. In terms of biological role, binds to 23S rRNA. This Cuscuta gronovii (Common dodder) protein is Large ribosomal subunit protein uL14c.